Consider the following 61-residue polypeptide: Probable pancreatic secretory proteinase inhibitor (61 aa).

The region spanning L6–C61 is the Kazal-like domain. Cystine bridges form between C12-C43, C21-C40, and C29-C61.

It localises to the secreted. This Anguilla anguilla (European freshwater eel) protein is Probable pancreatic secretory proteinase inhibitor.